A 413-amino-acid chain; its full sequence is DnaJ protein homolog xdj1 (413 aa).

One can recognise a J domain in the interval 6–73; the sequence is KLYDILEVHF…ESREMYDMYG (68 aa). The segment at 134-219 adopts a CR-type zinc-finger fold; it reads GKEVKLRATR…CKGSGTVPEQ (86 aa). CXXCXGXG motif repeat units follow at residues 147–154, 164–171, 191–198, and 207–214; these read CPRCQGRG, CLSCDGKG, CDTCNGKG, and CKHCKGSG. A Cysteine methyl ester modification is found at C410. C410 carries S-farnesyl cysteine lipidation. A propeptide spans 411 to 413 (removed in mature form); it reads QAQ.

The protein resides in the endoplasmic reticulum membrane. This Schizosaccharomyces pombe (strain 972 / ATCC 24843) (Fission yeast) protein is DnaJ protein homolog xdj1 (xdj1).